Consider the following 380-residue polypeptide: Calreticulin-3 (380 aa).

The signal sequence occupies residues 1-19 (MVSARALLWAICVLRVALA). The N-domain stretch occupies residues 20-197 (TVYFQEEFLD…GQSIESGSIE (178 aa)). A glycan (N-linked (GlcNAc...) asparagine) is linked at asparagine 42. Residues tyrosine 109, lysine 111, tyrosine 128, and aspartate 135 each coordinate an alpha-D-glucoside. An intrachain disulfide couples cysteine 137 to cysteine 163. 7 consecutive repeat copies span residues 191–202 (IESGSIEYDWNL), 209–220 (EKTSLDSRDWDQ), 222–231 (EGSKVQDWEK), 235–246 (DAGASKPSDWNS), 250–256 (GDWLQKP), 260–268 (DGLKAEGID), and 270–280 (DVWLHQKMRPA). A 4 X approximate repeats region spans residues 191–246 (IESGSIEYDWNLTSLRKTEKTSLDSRDWDQVEGSKVQDWEKHFLDAGASKPSDWNS). The P-domain stretch occupies residues 198–291 (YDWNLTSLRK…YLTQYDLSEF (94 aa)). The N-linked (GlcNAc...) asparagine glycan is linked to asparagine 201. Positions 250 to 280 (GDWLQKPPYEDGLKAEGIDKDVWLHQKMRPA) are 3 X approximate repeats. A C-domain region spans residues 292–380 (ENIGAIGLEL…FSRFHRQGEL (89 aa)). Glutamate 300 is an an alpha-D-glucoside binding site. A Prevents secretion from ER motif is present at residues 377–380 (QGEL).

The protein belongs to the calreticulin family. As to quaternary structure, component of an EIF2 complex at least composed of CELF1/CUGBP1, CALR, CALR3, EIF2S1, EIF2S2, HSP90B1 and HSPA5. As to expression, testis specific, absent in mature sperm.

The protein resides in the endoplasmic reticulum lumen. Its function is as follows. CALR3 capacity for calcium-binding may be absent or much lower than that of CALR. During spermatogenesis, may act as a lectin-independent chaperone for specific client proteins such as ADAM3. Required for sperm fertility. This chain is Calreticulin-3 (Calr3), found in Mus musculus (Mouse).